We begin with the raw amino-acid sequence, 144 residues long: MSAAGDLRRRARLSRLVSFSASHRLHSPSLSDEENLRVFGKCNNPNGHGHNYKVVVTVHGEIDPVTGMVMNLTDLKEYMEEAIMKPLDHKNLDLDVPYFADAVSTTENVAVYIWESLQKLLPVGALYKVKVFETDNNIVVYKGE.

Serine 18 is modified (phosphoserine). Residue histidine 23 participates in Zn(2+) binding. A Phosphoserine modification is found at serine 27. Residue cysteine 42 is the Proton acceptor of the active site. 2 residues coordinate Zn(2+): histidine 48 and histidine 50. Residue histidine 89 is the Charge relay system of the active site. Tyrosine 127 is subject to Phosphotyrosine. Residue glutamate 133 is the Charge relay system of the active site.

Belongs to the PTPS family. As to quaternary structure, homodimer. Homohexamer formed of two homotrimers in a head to head fashion. Requires Zn(2+) as cofactor. Phosphorylation of Ser-18 is required for maximal enzyme activity.

It carries out the reaction 7,8-dihydroneopterin 3'-triphosphate = 6-pyruvoyl-5,6,7,8-tetrahydropterin + triphosphate + H(+). It functions in the pathway cofactor biosynthesis; tetrahydrobiopterin biosynthesis; tetrahydrobiopterin from 7,8-dihydroneopterin triphosphate: step 1/3. Functionally, involved in the biosynthesis of tetrahydrobiopterin, an essential cofactor of aromatic amino acid hydroxylases. Catalyzes the transformation of 7,8-dihydroneopterin triphosphate into 6-pyruvoyl tetrahydropterin. This is 6-pyruvoyl tetrahydrobiopterin synthase from Mus musculus (Mouse).